The chain runs to 509 residues: 2,3-bisphosphoglycerate-independent phosphoglycerate mutase (509 aa).

Asp11 is a binding site for Mn(2+). Tyr35 carries the post-translational modification Phosphotyrosine. Ser61 is a binding site for Mn(2+). The active-site Phosphoserine intermediate is the Ser61. Residues His122, 152 to 153 (RD), Arg184, Arg190, 260 to 263 (RPDR), and Lys335 each bind substrate. Mn(2+) contacts are provided by Asp402, His406, Asp443, His444, and His461.

This sequence belongs to the BPG-independent phosphoglycerate mutase family. Monomer. Requires Mn(2+) as cofactor.

It catalyses the reaction (2R)-2-phosphoglycerate = (2R)-3-phosphoglycerate. It functions in the pathway carbohydrate degradation; glycolysis; pyruvate from D-glyceraldehyde 3-phosphate: step 3/5. In terms of biological role, essential for rapid growth and for sporulation. Catalyzes the interconversion of 2-phosphoglycerate and 3-phosphoglycerate. This is 2,3-bisphosphoglycerate-independent phosphoglycerate mutase from Bacillus cereus (strain ATCC 14579 / DSM 31 / CCUG 7414 / JCM 2152 / NBRC 15305 / NCIMB 9373 / NCTC 2599 / NRRL B-3711).